The primary structure comprises 472 residues: NADH-quinone oxidoreductase subunit N (472 aa).

Transmembrane regions (helical) follow at residues Leu-5–Leu-25, Ala-36–Ile-56, Ile-77–Pro-97, Phe-103–Leu-123, Leu-126–Gly-146, Leu-158–Leu-178, Leu-197–Phe-217, Pro-229–Val-249, Trp-264–Ile-284, Met-292–Met-309, Ile-319–Ala-339, Ala-363–Val-383, Gly-396–Leu-416, and Leu-441–Ala-461.

It belongs to the complex I subunit 2 family. NDH-1 is composed of 14 different subunits. Subunits NuoA, H, J, K, L, M, N constitute the membrane sector of the complex.

It localises to the cell membrane. The catalysed reaction is a quinone + NADH + 5 H(+)(in) = a quinol + NAD(+) + 4 H(+)(out). Functionally, NDH-1 shuttles electrons from NADH, via FMN and iron-sulfur (Fe-S) centers, to quinones in the respiratory chain. The immediate electron acceptor for the enzyme in this species is believed to be a menaquinone. Couples the redox reaction to proton translocation (for every two electrons transferred, four hydrogen ions are translocated across the cytoplasmic membrane), and thus conserves the redox energy in a proton gradient. The protein is NADH-quinone oxidoreductase subunit N of Heliobacterium modesticaldum (strain ATCC 51547 / Ice1).